Consider the following 226-residue polypeptide: Acyl-homoserine-lactone synthase (226 aa).

It belongs to the autoinducer synthase family.

The catalysed reaction is a fatty acyl-[ACP] + S-adenosyl-L-methionine = an N-acyl-L-homoserine lactone + S-methyl-5'-thioadenosine + holo-[ACP] + H(+). Its function is as follows. Required for the synthesis of OHHL (N-(3-oxohexanoyl)-L-homoserine lactone), an autoinducer molecule. This is Acyl-homoserine-lactone synthase (psyI) from Pseudomonas amygdali pv. tabaci (Pseudomonas syringae pv. tabaci).